A 278-amino-acid chain; its full sequence is Shikimate dehydrogenase (NADP(+)) (278 aa).

Shikimate-binding positions include 18 to 20 (SRS) and threonine 65. Lysine 69 (proton acceptor) is an active-site residue. Residue glutamate 80 participates in NADP(+) binding. Shikimate is bound by residues asparagine 89 and aspartate 104. Residues 129 to 133 (GAGGS) and leucine 218 contribute to the NADP(+) site. Tyrosine 220 is a shikimate binding site. Glycine 241 contacts NADP(+).

It belongs to the shikimate dehydrogenase family. In terms of assembly, homodimer.

The enzyme catalyses shikimate + NADP(+) = 3-dehydroshikimate + NADPH + H(+). The protein operates within metabolic intermediate biosynthesis; chorismate biosynthesis; chorismate from D-erythrose 4-phosphate and phosphoenolpyruvate: step 4/7. Its function is as follows. Involved in the biosynthesis of the chorismate, which leads to the biosynthesis of aromatic amino acids. Catalyzes the reversible NADPH linked reduction of 3-dehydroshikimate (DHSA) to yield shikimate (SA). The chain is Shikimate dehydrogenase (NADP(+)) from Rhodopseudomonas palustris (strain ATCC BAA-98 / CGA009).